A 510-amino-acid chain; its full sequence is 2,3-bisphosphoglycerate-independent phosphoglycerate mutase (510 aa).

Aspartate 13 and serine 63 together coordinate Mn(2+). Catalysis depends on serine 63, which acts as the Phosphoserine intermediate. Residues histidine 124, 154–155, arginine 186, arginine 192, 262–265, and lysine 334 contribute to the substrate site; these read RD and RADR. Positions 401, 405, 442, 443, and 461 each coordinate Mn(2+).

It belongs to the BPG-independent phosphoglycerate mutase family. As to quaternary structure, monomer. The cofactor is Mn(2+).

The enzyme catalyses (2R)-2-phosphoglycerate = (2R)-3-phosphoglycerate. It functions in the pathway carbohydrate degradation; glycolysis; pyruvate from D-glyceraldehyde 3-phosphate: step 3/5. Its function is as follows. Catalyzes the interconversion of 2-phosphoglycerate and 3-phosphoglycerate. This chain is 2,3-bisphosphoglycerate-independent phosphoglycerate mutase, found in Vibrio parahaemolyticus serotype O3:K6 (strain RIMD 2210633).